An 898-amino-acid chain; its full sequence is Aconitate hydratase 1 (898 aa).

Ala2 is subject to N-acetylalanine. Substrate-binding positions include Gln90 and 209 to 211 (DSH). Residues Cys441, Cys507, and Cys510 each contribute to the [4Fe-4S] cluster site. Residues Arg540, Arg545, Arg703, and 784 to 785 (SR) each bind substrate.

Belongs to the aconitase/IPM isomerase family. As to quaternary structure, monomer. [4Fe-4S] cluster serves as cofactor. As to expression, mostly expressed in roots, stems and leaves, also present in stems and flowers.

The protein localises to the cytoplasm. It localises to the mitochondrion. The enzyme catalyses citrate = D-threo-isocitrate. It participates in carbohydrate metabolism; tricarboxylic acid cycle; isocitrate from oxaloacetate: step 2/2. In terms of biological role, catalyzes the isomerization of citrate to isocitrate via cis-aconitate. Contributes to oxidative stress tolerance. May have a role in respiration. In Arabidopsis thaliana (Mouse-ear cress), this protein is Aconitate hydratase 1.